Reading from the N-terminus, the 255-residue chain is uncharacterized protein (255 aa).

The protein belongs to the methyltransferase superfamily.

This is an uncharacterized protein from Mycolicibacterium paratuberculosis (strain ATCC BAA-968 / K-10) (Mycobacterium paratuberculosis).